The primary structure comprises 406 residues: Bifunctional protein GlmU (406 aa).

The interval 1-221 (MFIILAAGHG…EEEATGINSR (221 aa)) is pyrophosphorylase. Residues 5–8 (LAAG), lysine 19, glutamine 68, 73–74 (GT), 98–100 (YGD), glycine 134, glutamate 148, asparagine 162, and asparagine 219 each bind UDP-N-acetyl-alpha-D-glucosamine. Position 100 (aspartate 100) interacts with Mg(2+). Mg(2+) is bound at residue asparagine 219. The segment at 222 to 242 (NDLAKAEFYFQENRRKFFTDS) is linker. Residues 243–406 (GVTLVAPETV…RRKQMVKKIK (164 aa)) are N-acetyltransferase. Position 308 (lysine 308) interacts with UDP-N-acetyl-alpha-D-glucosamine. Histidine 320 functions as the Proton acceptor in the catalytic mechanism. 2 residues coordinate UDP-N-acetyl-alpha-D-glucosamine: tyrosine 323 and asparagine 334. Acetyl-CoA is bound by residues alanine 337, 343-344 (NY), alanine 380, and arginine 397.

It in the N-terminal section; belongs to the N-acetylglucosamine-1-phosphate uridyltransferase family. This sequence in the C-terminal section; belongs to the transferase hexapeptide repeat family. Homotrimer. Mg(2+) serves as cofactor.

The protein localises to the cytoplasm. The enzyme catalyses alpha-D-glucosamine 1-phosphate + acetyl-CoA = N-acetyl-alpha-D-glucosamine 1-phosphate + CoA + H(+). The catalysed reaction is N-acetyl-alpha-D-glucosamine 1-phosphate + UTP + H(+) = UDP-N-acetyl-alpha-D-glucosamine + diphosphate. The protein operates within nucleotide-sugar biosynthesis; UDP-N-acetyl-alpha-D-glucosamine biosynthesis; N-acetyl-alpha-D-glucosamine 1-phosphate from alpha-D-glucosamine 6-phosphate (route II): step 2/2. Its pathway is nucleotide-sugar biosynthesis; UDP-N-acetyl-alpha-D-glucosamine biosynthesis; UDP-N-acetyl-alpha-D-glucosamine from N-acetyl-alpha-D-glucosamine 1-phosphate: step 1/1. It participates in bacterial outer membrane biogenesis; LPS lipid A biosynthesis. In terms of biological role, catalyzes the last two sequential reactions in the de novo biosynthetic pathway for UDP-N-acetylglucosamine (UDP-GlcNAc). The C-terminal domain catalyzes the transfer of acetyl group from acetyl coenzyme A to glucosamine-1-phosphate (GlcN-1-P) to produce N-acetylglucosamine-1-phosphate (GlcNAc-1-P), which is converted into UDP-GlcNAc by the transfer of uridine 5-monophosphate (from uridine 5-triphosphate), a reaction catalyzed by the N-terminal domain. This is Bifunctional protein GlmU from Wolbachia sp. subsp. Brugia malayi (strain TRS).